The sequence spans 386 residues: S-adenosylmethionine synthase (386 aa).

Position 16 (His16) interacts with ATP. Position 18 (Asp18) interacts with Mg(2+). Glu44 lines the K(+) pocket. Residues Glu57 and Gln100 each coordinate L-methionine. The segment at 100 to 110 is flexible loop; it reads QSSDIAQGVDR. Residues 165–167, Asp240, 246–247, Ala263, and Lys267 each bind ATP; these read DAK and RK. Position 240 (Asp240) interacts with L-methionine. Lys271 lines the L-methionine pocket.

Belongs to the AdoMet synthase family. As to quaternary structure, homotetramer; dimer of dimers. It depends on Mg(2+) as a cofactor. Requires K(+) as cofactor.

The protein resides in the cytoplasm. It carries out the reaction L-methionine + ATP + H2O = S-adenosyl-L-methionine + phosphate + diphosphate. Its pathway is amino-acid biosynthesis; S-adenosyl-L-methionine biosynthesis; S-adenosyl-L-methionine from L-methionine: step 1/1. In terms of biological role, catalyzes the formation of S-adenosylmethionine (AdoMet) from methionine and ATP. The overall synthetic reaction is composed of two sequential steps, AdoMet formation and the subsequent tripolyphosphate hydrolysis which occurs prior to release of AdoMet from the enzyme. The chain is S-adenosylmethionine synthase from Francisella philomiragia subsp. philomiragia (strain ATCC 25017 / CCUG 19701 / FSC 153 / O#319-036).